We begin with the raw amino-acid sequence, 121 residues long: Large ribosomal subunit protein bL21 (121 aa).

Belongs to the bacterial ribosomal protein bL21 family. As to quaternary structure, part of the 50S ribosomal subunit. Contacts protein L20.

Functionally, this protein binds to 23S rRNA in the presence of protein L20. The polypeptide is Large ribosomal subunit protein bL21 (Synechococcus sp. (strain CC9605)).